Consider the following 558-residue polypeptide: Formate--tetrahydrofolate ligase (558 aa).

ATP is bound at residue 65-72 (TPAGEGKT).

The protein belongs to the formate--tetrahydrofolate ligase family.

It catalyses the reaction (6S)-5,6,7,8-tetrahydrofolate + formate + ATP = (6R)-10-formyltetrahydrofolate + ADP + phosphate. It participates in one-carbon metabolism; tetrahydrofolate interconversion. The sequence is that of Formate--tetrahydrofolate ligase from Methylobacterium sp. (strain 4-46).